Here is a 194-residue protein sequence, read N- to C-terminus: Ras-related protein Rab-22A (194 aa).

Position 12 to 20 (Gly-12 to Ser-20) interacts with GTP. Positions Ile-34–Phe-42 match the Effector region motif. Residues Asp-60–Gln-64, Asn-118–Asp-121, and Ser-148–Lys-150 contribute to the GTP site. The disordered stretch occupies residues Pro-174–Cys-194. Residues Gln-185–Cys-194 are compositionally biased toward basic and acidic residues. 2 S-geranylgeranyl cysteine lipidation sites follow: Cys-193 and Cys-194.

It belongs to the small GTPase superfamily. Rab family. Interacts directly with ZFYVE20. Binds EEA1. Interacts (in its GTP-bound form) with RABGEF1. Interacts (in its GTP-bound form) with RINL.

The protein localises to the endosome membrane. The protein resides in the cell membrane. It is found in the early endosome. Its subcellular location is the late endosome. It localises to the cell projection. The protein localises to the ruffle. The protein resides in the cytoplasmic vesicle. It is found in the phagosome. Its subcellular location is the phagosome membrane. Plays a role in endocytosis and intracellular protein transport. Mediates trafficking of TF from early endosomes to recycling endosomes. Required for NGF-mediated endocytosis of NTRK1, and subsequent neurite outgrowth. Binds GTP and GDP and has low GTPase activity. Alternates between a GTP-bound active form and a GDP-bound inactive form. This chain is Ras-related protein Rab-22A (RAB22A), found in Homo sapiens (Human).